A 315-amino-acid chain; its full sequence is MKIGYFGTPEHSAKLLKALIDSTLAEVLFVVTNPDRPKGRNKKTEAGPVKKTALEHHIPVFQYESIKREKEKALSDFGSFPADLYVVFAYGSILPKEVYECPPLSSINLHGSLLPDLRGASPVQTALWKGYSASGITIQYIGEKMDEGDILLSQKIDIIPEDNTETLMNKITDAGTESILRLLKAYDGKPFPAIPQNHAKATYCGKIKSEDRILDWSLGAEELHNRIRALYPDAIATTRFREKRIGILKTKLSSLSIESNPEPGKLKRLDKKGLLTQCGDGRFLEILELQPENKNRMSASDFLNGFRIQEGETFG.

Residue 112 to 115 participates in (6S)-5,6,7,8-tetrahydrofolate binding; it reads SLLP.

Belongs to the Fmt family.

The enzyme catalyses L-methionyl-tRNA(fMet) + (6R)-10-formyltetrahydrofolate = N-formyl-L-methionyl-tRNA(fMet) + (6S)-5,6,7,8-tetrahydrofolate + H(+). In terms of biological role, attaches a formyl group to the free amino group of methionyl-tRNA(fMet). The formyl group appears to play a dual role in the initiator identity of N-formylmethionyl-tRNA by promoting its recognition by IF2 and preventing the misappropriation of this tRNA by the elongation apparatus. The chain is Methionyl-tRNA formyltransferase from Leptospira borgpetersenii serovar Hardjo-bovis (strain JB197).